A 139-amino-acid polypeptide reads, in one-letter code: Putative nickel-responsive regulator (139 aa).

Residues His-79, His-90, His-92, and Cys-98 each contribute to the Ni(2+) site.

It belongs to the transcriptional regulatory CopG/NikR family. Ni(2+) is required as a cofactor.

Its function is as follows. Transcriptional regulator. This chain is Putative nickel-responsive regulator, found in Solidesulfovibrio magneticus (strain ATCC 700980 / DSM 13731 / RS-1) (Desulfovibrio magneticus).